The chain runs to 496 residues: Cyclin-L1 (496 aa).

2 cyclin-like regions span residues 68–170 and 183–267; these read ELIQ…RILK and KIIV…TTLR. The segment at 301 to 496 is disordered; it reads NPDGTPAILS…SHSGHGRHRR (196 aa). Residues 322 to 347 are compositionally biased toward basic and acidic residues; it reads SPRDVKTEEKSPNFAKVKREMDDKQS. Basic residues-rich tracts occupy residues 358-392, 412-426, 434-446, and 456-468; these read ENKRSRSVSRSRSRTKSRSRSHSPRRHYNNRRRSR, RRHHNHGSPHMKLKH, RHAHKRKKSHSPS, and KKHRHEHGHHRER. The segment at 363 to 406 is RS; that stretch reads RSVSRSRSRTKSRSRSHSPRRHYNNRRRSRSGTYSSRSRSRSRS. The segment covering 469-478 has biased composition (basic and acidic residues); the sequence is RERSRSFERS. The segment covering 479-496 has biased composition (basic residues); that stretch reads HKNKHHGSSHSGHGRHRR.

Belongs to the cyclin family. Cyclin L subfamily.

It localises to the nucleus speckle. The protein resides in the nucleus. It is found in the nucleoplasm. In terms of biological role, involved in pre-mRNA splicing. The polypeptide is Cyclin-L1 (ccnl1) (Xenopus laevis (African clawed frog)).